A 184-amino-acid chain; its full sequence is ATP synthase subunit b, chloroplastic (184 aa).

The helical transmembrane segment at 27–49 (LATNLINLSVVLGVLIFFGKGVL) threads the bilayer.

It belongs to the ATPase B chain family. As to quaternary structure, F-type ATPases have 2 components, F(1) - the catalytic core - and F(0) - the membrane proton channel. F(1) has five subunits: alpha(3), beta(3), gamma(1), delta(1), epsilon(1). F(0) has four main subunits: a(1), b(1), b'(1) and c(10-14). The alpha and beta chains form an alternating ring which encloses part of the gamma chain. F(1) is attached to F(0) by a central stalk formed by the gamma and epsilon chains, while a peripheral stalk is formed by the delta, b and b' chains.

It localises to the plastid. It is found in the chloroplast thylakoid membrane. Functionally, f(1)F(0) ATP synthase produces ATP from ADP in the presence of a proton or sodium gradient. F-type ATPases consist of two structural domains, F(1) containing the extramembraneous catalytic core and F(0) containing the membrane proton channel, linked together by a central stalk and a peripheral stalk. During catalysis, ATP synthesis in the catalytic domain of F(1) is coupled via a rotary mechanism of the central stalk subunits to proton translocation. In terms of biological role, component of the F(0) channel, it forms part of the peripheral stalk, linking F(1) to F(0). The sequence is that of ATP synthase subunit b, chloroplastic from Liriodendron tulipifera (Tuliptree).